Here is a 225-residue protein sequence, read N- to C-terminus: Urease accessory protein UreF (225 aa).

The protein belongs to the UreF family. In terms of assembly, ureD, UreF and UreG form a complex that acts as a GTP-hydrolysis-dependent molecular chaperone, activating the urease apoprotein by helping to assemble the nickel containing metallocenter of UreC. The UreE protein probably delivers the nickel.

It localises to the cytoplasm. Required for maturation of urease via the functional incorporation of the urease nickel metallocenter. This is Urease accessory protein UreF from Arthrobacter sp. (strain FB24).